Consider the following 126-residue polypeptide: UPF0102 protein TP_0913 (126 aa).

The protein belongs to the UPF0102 family.

This chain is UPF0102 protein TP_0913, found in Treponema pallidum (strain Nichols).